An 848-amino-acid polypeptide reads, in one-letter code: Trimethylamine-N-oxide reductase 1 (848 aa).

A signal peptide (tat-type signal) is located at residues 1 to 39 (MNNNDLFQASRRRFLAQLGGLTVAGMLGPSLLTPRRATA). Ser-191 contacts Mo-bis(molybdopterin guanine dinucleotide).

Belongs to the prokaryotic molybdopterin-containing oxidoreductase family. Interacts with the N-terminal domain of TorC. The cofactor is Mo-bis(molybdopterin guanine dinucleotide). Post-translationally, exported by the Tat system. The position of the signal peptide cleavage has been experimentally proven.

It is found in the periplasm. The enzyme catalyses trimethylamine + 2 Fe(III)-[cytochrome c] + H2O = trimethylamine N-oxide + 2 Fe(II)-[cytochrome c] + 3 H(+). In terms of biological role, reduces trimethylamine-N-oxide (TMAO) into trimethylamine; an anaerobic reaction coupled to energy-yielding reactions. This chain is Trimethylamine-N-oxide reductase 1 (torA), found in Escherichia coli (strain K12).